We begin with the raw amino-acid sequence, 200 residues long: Thymidine kinase (200 aa).

Residues 15 to 22 and 88 to 91 contribute to the ATP site; these read GPMYSGKS and DEVQ. E89 serves as the catalytic Proton acceptor. Residues C145, C148, C177, and C180 each contribute to the Zn(2+) site.

It belongs to the thymidine kinase family. As to quaternary structure, homotetramer.

The protein localises to the cytoplasm. It carries out the reaction thymidine + ATP = dTMP + ADP + H(+). The chain is Thymidine kinase from Mycoplasma mobile (strain ATCC 43663 / 163K / NCTC 11711) (Mesomycoplasma mobile).